Consider the following 248-residue polypeptide: 2-acetamido-2-deoxy-D-galactose-binding seed lectin 2 (248 aa).

N-linked (GlcNAc...) asparagine; partial glycosylation occurs at N119. Positions 128 and 130 each coordinate Mn(2+). Residues D130, Y132, N134, and D138 each coordinate Ca(2+). D138 and H144 together coordinate Mn(2+).

Belongs to the leguminous lectin family.

This is 2-acetamido-2-deoxy-D-galactose-binding seed lectin 2 from Cytisus scoparius (Scotch broom).